The sequence spans 199 residues: Putative DNA-directed RNA polymerase subunit L376 (199 aa).

Belongs to the eukaryotic RPB7/RPC8 RNA polymerase subunit family.

It is found in the virion. It carries out the reaction RNA(n) + a ribonucleoside 5'-triphosphate = RNA(n+1) + diphosphate. The sequence is that of Putative DNA-directed RNA polymerase subunit L376 from Acanthamoeba polyphaga (Amoeba).